We begin with the raw amino-acid sequence, 590 residues long: Putative sodium/calcium exchanger 6 (590 aa).

The first 19 residues, 1–19, serve as a signal peptide directing secretion; that stretch reads MRIHFFAFLIILSLVGCDG. 11 helical membrane passes run 97–117, 139–159, 173–193, 208–228, 230–250, 368–388, 397–417, 440–460, 499–519, 535–555, and 568–588; these read IILI…VSSA, VAGV…GAIA, LGEL…VTIF, IAFY…YDHV, IWMP…VILS, PITL…IQVC, PGLW…VLFF, IAWI…LGVV, AAAI…PFTI, YRLL…AMFA, and LVFI…DILV.

The protein belongs to the Ca(2+):cation antiporter (CaCA) (TC 2.A.19) family.

It localises to the membrane. This is Putative sodium/calcium exchanger 6 (ncx-6) from Caenorhabditis elegans.